The sequence spans 542 residues: Chaperonin GroEL (542 aa).

Residues 29–32 (TLGP), 86–90 (DGTTT), Gly-413, 476–478 (NAA), and Asp-492 each bind ATP.

It belongs to the chaperonin (HSP60) family. As to quaternary structure, forms a cylinder of 14 subunits composed of two heptameric rings stacked back-to-back. Interacts with the co-chaperonin GroES.

It is found in the cytoplasm. The enzyme catalyses ATP + H2O + a folded polypeptide = ADP + phosphate + an unfolded polypeptide.. Its function is as follows. Together with its co-chaperonin GroES, plays an essential role in assisting protein folding. The GroEL-GroES system forms a nano-cage that allows encapsulation of the non-native substrate proteins and provides a physical environment optimized to promote and accelerate protein folding. The chain is Chaperonin GroEL from Bacillus cytotoxicus (strain DSM 22905 / CIP 110041 / 391-98 / NVH 391-98).